The chain runs to 343 residues: Fanconi anemia group F protein (343 aa).

In terms of assembly, belongs to the multisubunit FA complex composed of FANCA, FANCB, FANCC, FANCE, FANCF, FANCG, FANCL/PHF9 and FANCM. In complex with FANCA, FANCG and FANCL, but not with FANCC, nor FANCE, interacts with HES1; this interaction may be essential for the stability and nuclear localization of FA core complex proteins.

Its subcellular location is the nucleus. DNA repair protein that may operate in a postreplication repair or a cell cycle checkpoint function. May be implicated in interstrand DNA cross-link repair and in the maintenance of normal chromosome stability. The chain is Fanconi anemia group F protein from Mus musculus (Mouse).